A 487-amino-acid polypeptide reads, in one-letter code: Benzaldehyde dehydrogenase [NAD(+)] (487 aa).

232–237 is an NAD(+) binding site; that stretch reads GSTQVG. Residues glutamate 254 and cysteine 288 contribute to the active site.

It belongs to the aldehyde dehydrogenase family. As to quaternary structure, homotetramer.

It catalyses the reaction benzaldehyde + NAD(+) + H2O = benzoate + NADH + 2 H(+). The sequence is that of Benzaldehyde dehydrogenase [NAD(+)] (xylC) from Pseudomonas putida (Arthrobacter siderocapsulatus).